Reading from the N-terminus, the 283-residue chain is tRNA-cytidine(32) 2-sulfurtransferase (283 aa).

The PP-loop motif signature appears at 37–42; that stretch reads SGGKDS. Residues Cys-112, Cys-115, and Cys-203 each contribute to the [4Fe-4S] cluster site.

This sequence belongs to the TtcA family. As to quaternary structure, homodimer. Requires Mg(2+) as cofactor. [4Fe-4S] cluster is required as a cofactor.

It localises to the cytoplasm. It catalyses the reaction cytidine(32) in tRNA + S-sulfanyl-L-cysteinyl-[cysteine desulfurase] + AH2 + ATP = 2-thiocytidine(32) in tRNA + L-cysteinyl-[cysteine desulfurase] + A + AMP + diphosphate + H(+). It functions in the pathway tRNA modification. In terms of biological role, catalyzes the ATP-dependent 2-thiolation of cytidine in position 32 of tRNA, to form 2-thiocytidine (s(2)C32). The sulfur atoms are provided by the cysteine/cysteine desulfurase (IscS) system. In Legionella pneumophila subsp. pneumophila (strain Philadelphia 1 / ATCC 33152 / DSM 7513), this protein is tRNA-cytidine(32) 2-sulfurtransferase.